Consider the following 132-residue polypeptide: Small ribosomal subunit protein uS8 (132 aa).

The protein belongs to the universal ribosomal protein uS8 family. Part of the 30S ribosomal subunit. Contacts proteins S5 and S12.

Its function is as follows. One of the primary rRNA binding proteins, it binds directly to 16S rRNA central domain where it helps coordinate assembly of the platform of the 30S subunit. This chain is Small ribosomal subunit protein uS8, found in Streptococcus uberis (strain ATCC BAA-854 / 0140J).